Consider the following 213-residue polypeptide: NDR1/HIN1-like protein 26 (213 aa).

The Cytoplasmic segment spans residues 1–27 (MSQISITSPKHCAKKGGININNRHKKL). The chain crosses the membrane as a helical span at residues 28 to 48 (FFTFSTFFSGLLLIIFLVWLI). The Lumenal portion of the chain corresponds to 49-213 (LHPERPEFSL…LQGTRCSTTI (165 aa)). 3 N-linked (GlcNAc...) asparagine glycosylation sites follow: Asn-67, Asn-77, and Asn-195.

As to expression, expressed in the vasculature of roots, rosette leaves, stems, cauline leaves and flowers. Specifically expressed in phloem.

It is found in the cell junction. It localises to the plasmodesma. The protein localises to the endoplasmic reticulum membrane. Its function is as follows. Involved in the regulation of sugar, amino acid and some primary metabolite export from companion cells (CCs) to sieve elements (SEs) in phloem. Required for apoplastic phloem sugar loading in source leaves in order to transport it to sink tissues. Required for correct sugar partitioning between source leaves and sink organs. This chain is NDR1/HIN1-like protein 26, found in Arabidopsis thaliana (Mouse-ear cress).